The following is a 1303-amino-acid chain: DNA-directed RNA polymerase subunit beta' (1303 aa).

4 residues coordinate Zn(2+): Cys-60, Cys-62, Cys-75, and Cys-78. Asp-535, Asp-537, and Asp-539 together coordinate Mg(2+). The Zn(2+) site is built by Cys-876, Cys-953, Cys-960, and Cys-963.

The protein belongs to the RNA polymerase beta' chain family. As to quaternary structure, the RNAP catalytic core consists of 2 alpha, 1 beta, 1 beta' and 1 omega subunit. When a sigma factor is associated with the core the holoenzyme is formed, which can initiate transcription. The cofactor is Mg(2+). Zn(2+) is required as a cofactor.

It carries out the reaction RNA(n) + a ribonucleoside 5'-triphosphate = RNA(n+1) + diphosphate. DNA-dependent RNA polymerase catalyzes the transcription of DNA into RNA using the four ribonucleoside triphosphates as substrates. This Saccharopolyspora erythraea (strain ATCC 11635 / DSM 40517 / JCM 4748 / NBRC 13426 / NCIMB 8594 / NRRL 2338) protein is DNA-directed RNA polymerase subunit beta'.